Here is a 460-residue protein sequence, read N- to C-terminus: GTPase Der (460 aa).

2 EngA-type G domains span residues P21–D187 and V198–N373. Residues G27–S34, D74–F78, N141–E144, G204–S211, D251–I255, and N316–D319 contribute to the GTP site. Positions T374–C457 constitute a KH-like domain.

This sequence belongs to the TRAFAC class TrmE-Era-EngA-EngB-Septin-like GTPase superfamily. EngA (Der) GTPase family. In terms of assembly, associates with the 50S ribosomal subunit.

In terms of biological role, GTPase that plays an essential role in the late steps of ribosome biogenesis. The chain is GTPase Der from Treponema pallidum subsp. pallidum (strain SS14).